The sequence spans 162 residues: D-aminoacyl-tRNA deacylase (162 aa).

Residues 145 to 146 (GP) carry the Gly-cisPro motif, important for rejection of L-amino acids motif.

This sequence belongs to the DTD family. Homodimer.

The protein resides in the cytoplasm. It catalyses the reaction glycyl-tRNA(Ala) + H2O = tRNA(Ala) + glycine + H(+). The enzyme catalyses a D-aminoacyl-tRNA + H2O = a tRNA + a D-alpha-amino acid + H(+). In terms of biological role, an aminoacyl-tRNA editing enzyme that deacylates mischarged D-aminoacyl-tRNAs. Also deacylates mischarged glycyl-tRNA(Ala), protecting cells against glycine mischarging by AlaRS. Acts via tRNA-based rather than protein-based catalysis; rejects L-amino acids rather than detecting D-amino acids in the active site. By recycling D-aminoacyl-tRNA to D-amino acids and free tRNA molecules, this enzyme counteracts the toxicity associated with the formation of D-aminoacyl-tRNA entities in vivo and helps enforce protein L-homochirality. This chain is D-aminoacyl-tRNA deacylase, found in Bifidobacterium longum (strain NCC 2705).